A 582-amino-acid polypeptide reads, in one-letter code: TBCC domain-containing protein 1 (582 aa).

Over residues 140 to 153 the composition is skewed to low complexity; it reads EWPSPRSRSPSSSS. Residues 140–159 form a disordered region; it reads EWPSPRSRSPSSSSSERDAK. Positions 305–451 constitute a C-CAP/cofactor C-like domain; that stretch reads PPGSRLVLMS…LWNQPLLFGV (147 aa). Residues 547–558 show a composition bias toward low complexity; that stretch reads SLLPPTITPSSS. The disordered stretch occupies residues 547 to 582; it reads SLLPPTITPSSSAEHWSSNQNTLKEQTHEQPTGTVC. A compositionally biased stretch (polar residues) spans 559–582; sequence AEHWSSNQNTLKEQTHEQPTGTVC.

Belongs to the TBCC family.

The protein resides in the cytoplasm. It localises to the cytoskeleton. Its subcellular location is the microtubule organizing center. The protein localises to the centrosome. It is found in the spindle pole. In terms of biological role, may play a role in the regulation of centrosome and Golgi apparatus positioning. The chain is TBCC domain-containing protein 1 (tbccd1) from Danio rerio (Zebrafish).